The following is a 178-amino-acid chain: Ribosome maturation factor RimP (178 aa).

It belongs to the RimP family.

The protein resides in the cytoplasm. Its function is as follows. Required for maturation of 30S ribosomal subunits. The protein is Ribosome maturation factor RimP of Corynebacterium glutamicum (strain ATCC 13032 / DSM 20300 / JCM 1318 / BCRC 11384 / CCUG 27702 / LMG 3730 / NBRC 12168 / NCIMB 10025 / NRRL B-2784 / 534).